The following is a 217-amino-acid chain: MRPALFLCPVLISVLFLLSSLSLISGCNKALCASDVSKCLLQGLCQCRPQEGNCSCCKECMLCLSSLWEECCDCVGMCNPRSYNDSPATSKSTVEELYRPIPSLFRALTEGDAPINMMVVSFPVAEELSHHENLVSFLETLDSQSQNISLPTSSAQDDALCTVVYFDDCVSIRQCKQYCESMGGSKYRWFHNACCECIGPECLDYGSKTVKCMNCLI.

A signal peptide spans 1–26 (MRPALFLCPVLISVLFLLSSLSLISG). N-linked (GlcNAc...) asparagine glycans are attached at residues N53 and N147.

This sequence belongs to the twisted gastrulation protein family.

The protein localises to the secreted. Functionally, involved in dorsal-ventral patterning. Appears to function predominantly as a ventralizing factor, through its actions as a BMP signaling agonist, acting through both chd-dependent and chd-independent mechanisms. May also antagonize BMP signaling, probably via formation of ternary complexes with chd and BMPs, resulting in dorsalization. In Danio rerio (Zebrafish), this protein is Twisted gastrulation protein homolog 1-A (twsg1a).